A 921-amino-acid polypeptide reads, in one-letter code: DNA ligase (921 aa).

Residues 90 to 94, 139 to 140, and E173 each bind NAD(+); these read DAAYD and SL. The active-site N6-AMP-lysine intermediate is the K175. The NAD(+) site is built by R196, E235, K360, and K384. C481, C484, C500, and C506 together coordinate Zn(2+). The tract at residues 663-688 is disordered; it reads EAAIESAETQGGAASETTGAPTGAEA. Positions 839–921 constitute a BRCT domain; the sequence is SLPQTLAGKT…AQLLETGSID (83 aa).

This sequence belongs to the NAD-dependent DNA ligase family. LigA subfamily. Mg(2+) serves as cofactor. It depends on Mn(2+) as a cofactor.

The enzyme catalyses NAD(+) + (deoxyribonucleotide)n-3'-hydroxyl + 5'-phospho-(deoxyribonucleotide)m = (deoxyribonucleotide)n+m + AMP + beta-nicotinamide D-nucleotide.. Its function is as follows. DNA ligase that catalyzes the formation of phosphodiester linkages between 5'-phosphoryl and 3'-hydroxyl groups in double-stranded DNA using NAD as a coenzyme and as the energy source for the reaction. It is essential for DNA replication and repair of damaged DNA. This is DNA ligase from Bifidobacterium longum subsp. infantis (strain ATCC 15697 / DSM 20088 / JCM 1222 / NCTC 11817 / S12).